A 635-amino-acid chain; its full sequence is Threonine--tRNA ligase (635 aa).

The TGS domain maps to 1–61 (MIKITLKDGK…HKDSSLEILT (61 aa)). Residues 242-532 (DHRKLGKELD…LIEQYAGAFP (291 aa)) are catalytic. Residues cysteine 333, histidine 384, and histidine 509 each contribute to the Zn(2+) site.

This sequence belongs to the class-II aminoacyl-tRNA synthetase family. In terms of assembly, homodimer. Zn(2+) serves as cofactor.

The protein localises to the cytoplasm. The catalysed reaction is tRNA(Thr) + L-threonine + ATP = L-threonyl-tRNA(Thr) + AMP + diphosphate + H(+). Functionally, catalyzes the attachment of threonine to tRNA(Thr) in a two-step reaction: L-threonine is first activated by ATP to form Thr-AMP and then transferred to the acceptor end of tRNA(Thr). Also edits incorrectly charged L-seryl-tRNA(Thr). The polypeptide is Threonine--tRNA ligase (Clostridium botulinum (strain 657 / Type Ba4)).